Consider the following 185-residue polypeptide: Ribosome-recycling factor (185 aa).

This sequence belongs to the RRF family.

The protein resides in the cytoplasm. In terms of biological role, responsible for the release of ribosomes from messenger RNA at the termination of protein biosynthesis. May increase the efficiency of translation by recycling ribosomes from one round of translation to another. The chain is Ribosome-recycling factor from Shewanella sp. (strain ANA-3).